A 543-amino-acid chain; its full sequence is tRNA (guanine(37)-N(1))-methyltransferase (543 aa).

The N-terminal 59 residues, 1–59 (MLKSLCFVIRPAIVSRPQFRLPTIARLSLRQFQNQPQSVGFFTMAPLETRALALSPSAT), are a transit peptide targeting the mitochondrion. Residues His-282, 320-321 (DL), and 348-349 (DG) contribute to the S-adenosyl-L-methionine site. The interval 366-405 (DPAPPPKVSNRQRDREAKEARRKREQAKAAGQPVTETAPM) is disordered. Asn-431 contacts S-adenosyl-L-methionine.

The protein belongs to the class I-like SAM-binding methyltransferase superfamily. TRM5/TYW2 family. Monomer.

The protein resides in the mitochondrion matrix. Its subcellular location is the nucleus. It localises to the cytoplasm. The enzyme catalyses guanosine(37) in tRNA + S-adenosyl-L-methionine = N(1)-methylguanosine(37) in tRNA + S-adenosyl-L-homocysteine + H(+). Specifically methylates the N1 position of guanosine-37 in various cytoplasmic and mitochondrial tRNAs. Methylation is not dependent on the nature of the nucleoside 5' of the target nucleoside. This is the first step in the biosynthesis of wybutosine (yW), a modified base adjacent to the anticodon of tRNAs and required for accurate decoding. This is tRNA (guanine(37)-N(1))-methyltransferase from Cryptococcus neoformans var. neoformans serotype D (strain JEC21 / ATCC MYA-565) (Filobasidiella neoformans).